Consider the following 301-residue polypeptide: Transposase InsD for insertion element IS2D (301 aa).

The 184-residue stretch at Lys106–Ala289 folds into the Integrase catalytic domain.

Involved in the transposition of the insertion sequence IS2. In Escherichia coli (strain K12), this protein is Transposase InsD for insertion element IS2D (insD2).